A 64-amino-acid chain; its full sequence is Temporin-ALg (64 aa).

The N-terminal stretch at 1–22 is a signal peptide; the sequence is MFTLKKSLLLLFFLGTINLSLC. The propeptide occupies 23 to 46; sequence EQERNAEEERRDDLGERQAEVEKR. Leucine amide is present on leucine 62.

The protein belongs to the frog skin active peptide (FSAP) family. Temporin subfamily. As to expression, expressed by the skin glands.

It is found in the secreted. In terms of biological role, antimicrobial peptide with activity against Gram-positive and Gram-negative bacteria and against fungi. Has been tested against S.aureus (MIC=2.5 ug/mL), B.pumilus (MIC=2.5 ug/mL), B.cereus (MIC=30.0 ug/mL), E.coli (MIC=5.0 ug/mL), B.dysenteriae (MIC=10.0 ug/mL), A.cacoaceticus (MIC=30.0 ug/mL), P.aeruginosa (MIC=7.5 ug/mL) and C.albicans (MIC=1.25 ug/mL). Also shows a weak hemolytic activity. The chain is Temporin-ALg from Amolops loloensis (Lolokou Sucker Frog).